We begin with the raw amino-acid sequence, 602 residues long: Raftlin (602 aa).

G2 is lipidated: N-myristoyl glycine. C3 carries the S-palmitoyl cysteine lipid modification. Over residues 178-195 (TPASNNSVQSRDNKNVSN) the composition is skewed to polar residues. Disordered stretches follow at residues 178 to 282 (TPAS…RCSK), 451 to 495 (KKES…EVTE), and 524 to 567 (NETA…QSAP). Basic and acidic residues-rich tracts occupy residues 197–209 (PEDH…EKID) and 244–265 (PDCK…REAP). A compositionally biased stretch (basic residues) spans 468 to 477 (KPMKKSRKTK).

It belongs to the raftlin family.

It localises to the cell membrane. May play a pivotal role in the formation and/or maintenance of lipid rafts. May regulate B-cell antigen receptor-mediated signaling. The sequence is that of Raftlin (RFTN1) from Gallus gallus (Chicken).